We begin with the raw amino-acid sequence, 447 residues long: N-succinylarginine dihydrolase (447 aa).

Substrate is bound by residues 19–28, asparagine 110, and 137–138; these read AGLSFGNEAS and HR. Residue glutamate 174 is part of the active site. Arginine 212 contributes to the substrate binding site. Residue histidine 248 is part of the active site. Substrate-binding residues include aspartate 250 and asparagine 359. The active-site Nucleophile is the cysteine 365.

It belongs to the succinylarginine dihydrolase family. As to quaternary structure, homodimer.

It carries out the reaction N(2)-succinyl-L-arginine + 2 H2O + 2 H(+) = N(2)-succinyl-L-ornithine + 2 NH4(+) + CO2. Its pathway is amino-acid degradation; L-arginine degradation via AST pathway; L-glutamate and succinate from L-arginine: step 2/5. Its function is as follows. Catalyzes the hydrolysis of N(2)-succinylarginine into N(2)-succinylornithine, ammonia and CO(2). The polypeptide is N-succinylarginine dihydrolase (Escherichia fergusonii (strain ATCC 35469 / DSM 13698 / CCUG 18766 / IAM 14443 / JCM 21226 / LMG 7866 / NBRC 102419 / NCTC 12128 / CDC 0568-73)).